Consider the following 954-residue polypeptide: Glycine dehydrogenase (decarboxylating) (954 aa).

Residue Lys701 is modified to N6-(pyridoxal phosphate)lysine.

This sequence belongs to the GcvP family. As to quaternary structure, the glycine cleavage system is composed of four proteins: P, T, L and H. It depends on pyridoxal 5'-phosphate as a cofactor.

It catalyses the reaction N(6)-[(R)-lipoyl]-L-lysyl-[glycine-cleavage complex H protein] + glycine + H(+) = N(6)-[(R)-S(8)-aminomethyldihydrolipoyl]-L-lysyl-[glycine-cleavage complex H protein] + CO2. Its function is as follows. The glycine cleavage system catalyzes the degradation of glycine. The P protein binds the alpha-amino group of glycine through its pyridoxal phosphate cofactor; CO(2) is released and the remaining methylamine moiety is then transferred to the lipoamide cofactor of the H protein. In Bordetella parapertussis (strain 12822 / ATCC BAA-587 / NCTC 13253), this protein is Glycine dehydrogenase (decarboxylating).